The primary structure comprises 409 residues: Glucose-1-phosphate adenylyltransferase (409 aa).

Alpha-D-glucose 1-phosphate-binding positions include G168, 183 to 184 (EK), and S201.

Belongs to the bacterial/plant glucose-1-phosphate adenylyltransferase family. In terms of assembly, homotetramer.

It carries out the reaction alpha-D-glucose 1-phosphate + ATP + H(+) = ADP-alpha-D-glucose + diphosphate. The protein operates within glycan biosynthesis; glycogen biosynthesis. Involved in the biosynthesis of ADP-glucose, a building block required for the elongation reactions to produce glycogen. Catalyzes the reaction between ATP and alpha-D-glucose 1-phosphate (G1P) to produce pyrophosphate and ADP-Glc. The chain is Glucose-1-phosphate adenylyltransferase from Corynebacterium efficiens (strain DSM 44549 / YS-314 / AJ 12310 / JCM 11189 / NBRC 100395).